The sequence spans 52 residues: Conotoxin Cal6.3b (52 aa).

A propeptide spanning residues 1–4 is cleaved from the precursor; it reads KKKR. 3 disulfides stabilise this stretch: cysteine 12-cysteine 23, cysteine 15-cysteine 27, and cysteine 22-cysteine 30. Glutamine 50 bears the Glutamine amide mark.

Expressed by the venom duct.

It is found in the secreted. Probable neurotoxin with unknown target. Possibly targets ion channels. The protein is Conotoxin Cal6.3b of Californiconus californicus (California cone).